The primary structure comprises 428 residues: MGSVRTNRYSIVSSEEDGMKLATMAVANGFGNGKSKVHTRQQCRSRFVKKDGHCNVQFINVGEKGQRYLADIFTTCVDIRWRWMLVIFCLAFVLSWLFFGCVFWLIALLHGDLDTSKVSKACVSEVNSFTAAFLFSIETQTTIGYGFRCVTDECPIAVFMVVFQSIVGCIIDAFIIGAVMAKMAKPKKRNETLVFSHNAVIAMRDGKLCLMWRVGNLRKSHLVEAHVRAQLLKSRITSEGEYIPLDQIDINVGFDSGIDRIFLVSPITIVHEIDEDSPLYDLSKQDIDNADFEIVVILEGMVEATAMTTQCRSSYLANEILWGHRYEPVLFEEKHYYKVDYSRFHKTYEVPNTPLCSARDLAEKKYILSNANSFCYENEVALTSKEEEEDSENGVPESTSTDSPPGIDLHNQASVPLEPRPLRRESEI.

Over 1 to 81 the chain is Cytoplasmic; it reads MGSVRTNRYS…IFTTCVDIRW (81 aa). Cys-76 is modified (S-nitrosocysteine). Residues 82–106 form a helical membrane-spanning segment; the sequence is RWMLVIFCLAFVLSWLFFGCVFWLI. Topologically, residues 107–128 are extracellular; it reads ALLHGDLDTSKVSKACVSEVNS. Residues 129–140 constitute an intramembrane region (helical; Pore-forming); the sequence is FTAAFLFSIETQ. An intramembrane region (pore-forming) is located at residues 141–147; the sequence is TTIGYGF. The Selectivity filter motif lies at 142–147; the sequence is TIGYGF. The Extracellular portion of the chain corresponds to 148 to 156; the sequence is RCVTDECPI. A helical membrane pass occupies residues 157–178; the sequence is AVFMVVFQSIVGCIIDAFIIGA. At 179–428 the chain is on the cytoplasmic side; it reads VMAKMAKPKK…PRPLRRESEI (250 aa). The segment at 181-208 is polyphosphoinositide (PIP2)-binding; that stretch reads AKMAKPKKRNETLVFSHNAVIAMRDGKL. The tract at residues 383 to 428 is disordered; sequence TSKEEEEDSENGVPESTSTDSPPGIDLHNQASVPLEPRPLRRESEI. The PDZ-binding motif lies at 426–428; sequence SEI.

The protein belongs to the inward rectifier-type potassium channel (TC 1.A.2.1) family. KCNJ2 subfamily. Homotetramer. Homomultimeric and heteromultimeric association with KCNJ4/Kir2.3. Can form heteromeric channels with Kir2.6/KCNJ18. Associates, via its PDZ-recognition domain, with a complex containing LIN7A, LIN7B, LIN7C, DLG1, CASK and APBA1. Post-translationally, S-nitrosylation increases the open probability and inward rectifying currents. As to expression, prominently expressed in the central nervous system. Also found in other excitable tissues such as heart and skeletal muscle.

Its subcellular location is the cell membrane. The protein localises to the sarcolemma. It localises to the T-tubule. It carries out the reaction K(+)(in) = K(+)(out). Its activity is regulated as follows. Activated by phosphatidylinositol 4,5 biphosphate (PtdIns(4,5)P2). Functionally, inward rectifier potassium channels are characterized by a greater tendency to allow potassium to flow into the cell rather than out of it. Their voltage dependence is regulated by the concentration of extracellular potassium; as external potassium is raised, the voltage range of the channel opening shifts to more positive voltages. The inward rectification is mainly due to the blockage of outward current by internal magnesium. Can be blocked by extracellular barium and cesium. Probably participates in establishing action potential waveform and excitability of neuronal and muscle tissues. The sequence is that of Inward rectifier potassium channel 2 (Kcnj2) from Mus musculus (Mouse).